The sequence spans 100 residues: uncharacterized protein (100 aa).

Residues 40 to 100 (GDQMARKATS…DPTKNKSGRG (61 aa)) are disordered.

This is an uncharacterized protein from Mycobacterium tuberculosis (strain ATCC 25618 / H37Rv).